Consider the following 237-residue polypeptide: Putative N-acetylmannosamine-6-phosphate 2-epimerase (237 aa).

This sequence belongs to the NanE family.

The catalysed reaction is an N-acyl-D-glucosamine 6-phosphate = an N-acyl-D-mannosamine 6-phosphate. It functions in the pathway amino-sugar metabolism; N-acetylneuraminate degradation; D-fructose 6-phosphate from N-acetylneuraminate: step 3/5. In terms of biological role, converts N-acetylmannosamine-6-phosphate (ManNAc-6-P) to N-acetylglucosamine-6-phosphate (GlcNAc-6-P). The sequence is that of Putative N-acetylmannosamine-6-phosphate 2-epimerase from Listeria monocytogenes serotype 4a (strain HCC23).